The sequence spans 344 residues: L-rhamnose-proton symporter (344 aa).

10 helical membrane-spanning segments follow: residues 4–24 (AITM…CFYA), 38–58 (WSVG…ATLL), 72–92 (TLLP…NYGL), 101–121 (MGIG…TPII), 131–151 (TQGG…VGIV), 175–195 (LLLA…MNAA), 214–234 (LPSY…FCFI), 259–279 (LLLS…YAWG), 290–310 (MSWM…GLVL), and 323–343 (VLSL…LGMA).

This sequence belongs to the L-rhamnose transporter (TC 2.A.7.6) family.

Its subcellular location is the cell inner membrane. It catalyses the reaction L-rhamnopyranose(in) + H(+)(in) = L-rhamnopyranose(out) + H(+)(out). Its function is as follows. Uptake of L-rhamnose across the cytoplasmic membrane with the concomitant transport of protons into the cell (symport system). In Klebsiella pneumoniae (strain 342), this protein is L-rhamnose-proton symporter.